A 297-amino-acid chain; its full sequence is E3 ubiquitin-protein ligase RNF212B (297 aa).

The RING-type zinc finger occupies 6 to 40 (CNQCFRKDGAHFFVTSCGHIFCKKCMTLEKCAVCG). Positions 87 to 136 (LLIAFYKDRITKLEAAVKEAQEMAASQNKELSALRKENGELKKILDILKG) form a coiled coil. Disordered stretches follow at residues 152–179 (VGIT…RSSS) and 198–269 (RGLH…ESLP). Positions 163 to 179 (PRPSSHHSSQVVSRSSS) are enriched in low complexity. Over residues 206-234 (PGDSYTETPSPASTHSLSYRPSSASSGQG) the composition is skewed to polar residues.

Homodimer. In terms of processing, autoubiquitinated.

It is found in the chromosome. The enzyme catalyses S-ubiquitinyl-[E2 ubiquitin-conjugating enzyme]-L-cysteine + [acceptor protein]-L-lysine = [E2 ubiquitin-conjugating enzyme]-L-cysteine + N(6)-ubiquitinyl-[acceptor protein]-L-lysine.. It functions in the pathway protein modification; protein ubiquitination. Functionally, ubiquitin E3 ligase that acts as a crucial factor for crossing-over (CO) formation during meiosis. Essential for normal prophase I progression and for ensuring appropriate CO designation in meiosis. Recruits key components of the cross-over machinery either directly ou indirectly, leading to the activation of the MutL-gamma complex. The function of RNF212B in CO designation is dependent on its catalytic activity. This Mus musculus (Mouse) protein is E3 ubiquitin-protein ligase RNF212B (Rnf212b).